The primary structure comprises 503 residues: Transcription termination/antitermination protein NusA (503 aa).

The S1 motif domain maps to 139-203 (GEIINGIVKR…KGPQIFLSRV (65 aa)). A KH domain is found at 308–378 (RHKVEVVVSQ…LDVEEVIGQL (71 aa)).

This sequence belongs to the NusA family. In terms of assembly, monomer. Binds directly to the core enzyme of the DNA-dependent RNA polymerase and to nascent RNA.

It is found in the cytoplasm. In terms of biological role, participates in both transcription termination and antitermination. This is Transcription termination/antitermination protein NusA from Rickettsia conorii (strain ATCC VR-613 / Malish 7).